A 412-amino-acid polypeptide reads, in one-letter code: DNA primase DnaG (412 aa).

Residues proline 165–threonine 243 enclose the Toprim domain. Residues glutamate 171, aspartate 216, and aspartate 218 each contribute to the Mg(2+) site.

Belongs to the archaeal DnaG primase family. In terms of assembly, forms a ternary complex with MCM helicase and DNA. Component of the archaeal exosome complex. Mg(2+) serves as cofactor.

The enzyme catalyses ssDNA + n NTP = ssDNA/pppN(pN)n-1 hybrid + (n-1) diphosphate.. In terms of biological role, RNA polymerase that catalyzes the synthesis of short RNA molecules used as primers for DNA polymerase during DNA replication. Also part of the exosome, which is a complex involved in RNA degradation. Acts as a poly(A)-binding protein that enhances the interaction between heteromeric, adenine-rich transcripts and the exosome. The sequence is that of DNA primase DnaG from Sulfolobus acidocaldarius (strain ATCC 33909 / DSM 639 / JCM 8929 / NBRC 15157 / NCIMB 11770).